Reading from the N-terminus, the 360-residue chain is C-C chemokine receptor type 4 (360 aa).

Residues 1–39 (MNATEVTDTTQDETVYNSYYFYESMPKPCTKEGIKAFGE) lie on the Extracellular side of the membrane. N-linked (GlcNAc...) asparagine glycosylation is present at Asn-2. Residues 40 to 67 (VFLPPLYSLVFLLGLFGNSVVVLVLFKY) form a helical membrane-spanning segment. Residues 68 to 77 (KRLKSMTDVY) lie on the Cytoplasmic side of the membrane. A helical transmembrane segment spans residues 78–98 (LLNLAISDLLFVLSLPFWGYY). Residues 99–111 (AADQWVFGLGLCK) are Extracellular-facing. Cys-110 and Cys-187 form a disulfide bridge. The helical transmembrane segment at 112–133 (IVSWMYLVGFYSGIFFIMLMSI) threads the bilayer. At 134 to 150 (DRYLAIVHAVFSLKART) the chain is on the cytoplasmic side. A helical membrane pass occupies residues 151-175 (LTYGVITSLITWSVAVFASLPGLLF). Over 176-206 (STCYTEHNHTYCKTQYSVNSTTWKVLSSLEI) the chain is Extracellular. 2 N-linked (GlcNAc...) asparagine glycosylation sites follow: Asn-183 and Asn-194. A helical transmembrane segment spans residues 207-226 (NVLGLLIPLGIMLFCYSMII). Topologically, residues 227–242 (RTLQHCKNEKKNRAVR) are cytoplasmic. Residues 243–267 (MIFAVVVLFLGFWTPYNVVLFLETL) traverse the membrane as a helical segment. Residues 268–284 (VELEVLQDCTLERYLDY) are Extracellular-facing. The chain crosses the membrane as a helical span at residues 285–308 (AIQATETLAFIHCCLNPVIYFFLG). The Cytoplasmic portion of the chain corresponds to 309 to 360 (EKFRKYITQLFRTCRGPLVLCKHCDFLQVYSADMSSSSYTQSTVDHDFRDAL).

It belongs to the G-protein coupled receptor 1 family. In natural killer cells, CCL22 binding induces phosphorylation on yet undefined Ser/Thr residues, most probably by beta-adrenergic receptor kinases 1 and 2. In terms of tissue distribution, expressed in the thymus, macrophages and T- and B-cells.

It localises to the cell membrane. High affinity receptor for the C-C type chemokines CCL17/TARC and CCL22/MDC. The activity of this receptor is mediated by G(i) proteins which activate a phosphatidylinositol-calcium second messenger system. Could play a role in lipopolysaccharide (LPS)-induced endotoxic shock. In the CNS, could mediate hippocampal-neuron survival. In Mus musculus (Mouse), this protein is C-C chemokine receptor type 4 (Ccr4).